A 663-amino-acid polypeptide reads, in one-letter code: Transmembrane 9 superfamily member 2 (663 aa).

The signal sequence occupies residues 1–28 (MSARLPVLSPPRWPRLLLLSLLLLGAVP). Topologically, residues 29 to 300 (GPRRSGAFYL…LESMPHTHIQ (272 aa)) are lumenal. A helical transmembrane segment spans residues 301 to 321 (WFSIMNSLVIVLFLSGMVAMI). Over 322-374 (MLRTLHKDIARYNQMDSTEDAQEEFGWKLVHGDIFRPPRKGMLLSVFLGSGTQ) the chain is Cytoplasmic. Residues 375 to 395 (ILIMTFVTLFFACLGFLSPAN) form a helical membrane-spanning segment. The Lumenal segment spans residues 396–398 (RGA). A helical transmembrane segment spans residues 399–419 (LMTCAVVLWVLLGTPAGYVAA). Over 420 to 437 (RFYKSFGGEKWKTNVLLT) the chain is Cytoplasmic. A helical membrane pass occupies residues 438-458 (SFLCPGIVFADFFIMNLILWG). The Lumenal portion of the chain corresponds to 459–466 (EGSSAAIP). A helical membrane pass occupies residues 467-487 (FGTLVAILALWFCISVPLTFI). The Cytoplasmic segment spans residues 488–522 (GAYFGFKKNAIEHPVRTNQIPRQIPEQSFYTKPLP). The chain crosses the membrane as a helical span at residues 523–543 (GIIMGGILPFGCIFIQLFFIL). Residues 544-554 (NSIWSHQMYYM) are Lumenal-facing. The chain crosses the membrane as a helical span at residues 555–575 (FGFLFLVFIILVITCSEATIL). Topologically, residues 576 to 591 (LCYFHLCAEDYHWQWR) are cytoplasmic. A helical transmembrane segment spans residues 592–612 (SFLTSGFTAVYFLIYAVHYFF). Over 613-631 (SKLQITGTASTILYFGYTM) the chain is Lumenal. A helical membrane pass occupies residues 632–652 (IMVLIFFLFTGTIGFFACFWF). Residues 653–663 (VTKIYSVVKVD) lie on the Cytoplasmic side of the membrane.

This sequence belongs to the nonaspanin (TM9SF) (TC 9.A.2) family. In terms of tissue distribution, ubiquitously expressed. Especially abundant in pancreas, highly expressed in kidney, lower levels in heart, brain, skeletal muscle and placenta. Lowest expression in lung and liver.

The protein resides in the endosome membrane. Its subcellular location is the golgi outpost. It is found in the cytoplasm. The protein localises to the cytoskeleton. It localises to the microtubule organizing center. In the intracellular compartments, may function as a channel or small molecule transporter. The chain is Transmembrane 9 superfamily member 2 (TM9SF2) from Homo sapiens (Human).